Consider the following 284-residue polypeptide: Tropomyosin (284 aa).

Residues 1–273 (MEAIKKKMQA…KEKYKSISDE (273 aa)) are a coiled coil.

Belongs to the tropomyosin family. As to quaternary structure, homodimer. In terms of tissue distribution, ubiquitous, but especially prevalent in the anterior muscle bundles associated with legs. Expression in the mid and posterior regions is probably related to the numerous, small muscle bundles associated with the digestive and reproductive systems (at protein level).

Functionally, tropomyosin, in association with the troponin complex, plays a central role in the calcium dependent regulation of muscle contraction. This chain is Tropomyosin, found in Psoroptes ovis (Sheep scab mite).